A 257-amino-acid polypeptide reads, in one-letter code: Probable amino-acid ABC transporter ATP-binding protein HI_1078 (257 aa).

The region spanning 4-244 (LKVSNIQKNF…PQHERTKQFL (241 aa)) is the ABC transporter domain. 36–43 (GPSGSGKT) provides a ligand contact to ATP.

The protein belongs to the ABC transporter superfamily.

Its subcellular location is the cell inner membrane. In terms of biological role, probably part of a binding-protein-dependent transport system for an amino acid. Probably responsible for energy coupling to the transport system. In Haemophilus influenzae (strain ATCC 51907 / DSM 11121 / KW20 / Rd), this protein is Probable amino-acid ABC transporter ATP-binding protein HI_1078.